We begin with the raw amino-acid sequence, 204 residues long: High frequency lysogenization protein HflD homolog (204 aa).

This sequence belongs to the HflD family.

Its subcellular location is the cytoplasm. It is found in the cell inner membrane. This chain is High frequency lysogenization protein HflD homolog, found in Stenotrophomonas maltophilia (strain R551-3).